Reading from the N-terminus, the 593-residue chain is Probable ubiquitin carboxyl-terminal hydrolase 4 (593 aa).

Residues I227–S573 form the USP domain. C236 (nucleophile) is an active-site residue. 2 positions are modified to phosphoserine: S338 and S343. H530 functions as the Proton acceptor in the catalytic mechanism.

This sequence belongs to the peptidase C19 family. In terms of assembly, interacts with sfp47.

The protein resides in the cytoplasm. It is found in the endosome. It carries out the reaction Thiol-dependent hydrolysis of ester, thioester, amide, peptide and isopeptide bonds formed by the C-terminal Gly of ubiquitin (a 76-residue protein attached to proteins as an intracellular targeting signal).. Has an ATP-independent isopeptidase activity, cleaving at the C-terminus of the ubiquitin moiety. Acts late in the proteolytic pathway in conjunction with the 26S proteasome. Plays a role in avoiding DNA overreplication. The sequence is that of Probable ubiquitin carboxyl-terminal hydrolase 4 (ubp4) from Schizosaccharomyces pombe (strain 972 / ATCC 24843) (Fission yeast).